The chain runs to 63 residues: Prokaryotic ubiquitin-like protein Pup (63 aa).

Positions 1–35 (MSGQQSQINAGGGNGQGGDTPEFDAGQVSINSAGT) are disordered. An ARC ATPase binding region spans residues 19-57 (DTPEFDAGQVSINSAGTDDLLDEIDGLLESNAEEFVRSY). Residue glutamate 63 forms an Isoglutamyl lysine isopeptide (Glu-Lys) (interchain with K-? in acceptor proteins) linkage.

The protein belongs to the prokaryotic ubiquitin-like protein family. As to quaternary structure, strongly interacts with the proteasome-associated ATPase ARC through a hydrophobic interface; the interacting region of Pup lies in its C-terminal half. There is one Pup binding site per ARC hexamer ring.

It participates in protein degradation; proteasomal Pup-dependent pathway. Functionally, protein modifier that is covalently attached to lysine residues of substrate proteins, thereby targeting them for proteasomal degradation. The tagging system is termed pupylation. The sequence is that of Prokaryotic ubiquitin-like protein Pup from Corynebacterium aurimucosum (strain ATCC 700975 / DSM 44827 / CIP 107346 / CN-1) (Corynebacterium nigricans).